A 342-amino-acid polypeptide reads, in one-letter code: Dihydroorotase (342 aa).

Residues histidine 13 and histidine 15 each coordinate Zn(2+). Residues histidine 15–arginine 17 and asparagine 41 contribute to the substrate site. Zn(2+)-binding residues include lysine 97, histidine 134, and histidine 172. Lysine 97 is modified (N6-carboxylysine). Residue histidine 134 participates in substrate binding. Substrate is bound at residue leucine 217. Aspartate 245 is a Zn(2+) binding site. Aspartate 245 is a catalytic residue. Positions 249 and 261 each coordinate substrate.

This sequence belongs to the metallo-dependent hydrolases superfamily. DHOase family. Class II DHOase subfamily. In terms of assembly, homodimer. It depends on Zn(2+) as a cofactor.

The catalysed reaction is (S)-dihydroorotate + H2O = N-carbamoyl-L-aspartate + H(+). It functions in the pathway pyrimidine metabolism; UMP biosynthesis via de novo pathway; (S)-dihydroorotate from bicarbonate: step 3/3. Its function is as follows. Catalyzes the reversible cyclization of carbamoyl aspartate to dihydroorotate. In Shewanella loihica (strain ATCC BAA-1088 / PV-4), this protein is Dihydroorotase.